A 519-amino-acid chain; its full sequence is Berghepain-1 (519 aa).

The Cytoplasmic segment spans residues 1-32; that stretch reads MINDIRRINITTSSIESLNENSKYLKRNHKRT. A helical; Signal-anchor for type II membrane protein transmembrane segment spans residues 33–53; that stretch reads IKICAYAITTFALFFIVVVYF. The Lumenal segment spans residues 54–519; it reads KNQTNVNDAN…IGIDVFFPIL (466 aa). N-linked (GlcNAc...) asparagine glycosylation is found at Asn55 and Asn143. Disulfide bonds link Cys298–Cys340, Cys333–Cys373, Cys358–Cys378, and Cys427–Cys508. The active site involves Cys301. Asn432 is a glycosylation site (N-linked (GlcNAc...) asparagine). Residues His433 and Asn483 contribute to the active site.

Belongs to the peptidase C1 family.

The protein resides in the membrane. Its function is as follows. Cysteine protease. Required for host hepatocyte-derived merozoite infectivity and to a lesser extent for host erythrocyte-derived merozoite infectivity. The sequence is that of Berghepain-1 from Plasmodium berghei (strain Anka).